The primary structure comprises 355 residues: Methylthioribose-1-phosphate isomerase (355 aa).

Residues 53–55 (RGA), Arg-96, and Gln-205 each bind substrate. Asp-246 functions as the Proton donor in the catalytic mechanism. Substrate is bound at residue 256–257 (NK).

The protein belongs to the eIF-2B alpha/beta/delta subunits family. MtnA subfamily.

The enzyme catalyses 5-(methylsulfanyl)-alpha-D-ribose 1-phosphate = 5-(methylsulfanyl)-D-ribulose 1-phosphate. Its pathway is amino-acid biosynthesis; L-methionine biosynthesis via salvage pathway; L-methionine from S-methyl-5-thio-alpha-D-ribose 1-phosphate: step 1/6. Its function is as follows. Catalyzes the interconversion of methylthioribose-1-phosphate (MTR-1-P) into methylthioribulose-1-phosphate (MTRu-1-P). The polypeptide is Methylthioribose-1-phosphate isomerase (Thermosynechococcus vestitus (strain NIES-2133 / IAM M-273 / BP-1)).